The primary structure comprises 449 residues: Chromosomal replication initiator protein DnaA (449 aa).

The tract at residues 1-72 (MPNLEELWAY…VEGVYEFAQL (72 aa)) is domain I, interacts with DnaA modulators. Positions 72 to 109 (LEVDPVIMTKDELQPAPATDQRPAVEEDDQNLTFKAKT) are domain II. The interval 110–326 (HLNPKYTFDR…GALVRVQAFS (217 aa)) is domain III, AAA+ region. 4 residues coordinate ATP: Gly-154, Gly-156, Lys-157, and Thr-158. The domain IV, binds dsDNA stretch occupies residues 327-449 (TMKNEDITTS…ELRNILKNRG (123 aa)).

This sequence belongs to the DnaA family. Oligomerizes as a right-handed, spiral filament on DNA at oriC.

It is found in the cytoplasm. Plays an essential role in the initiation and regulation of chromosomal replication. ATP-DnaA binds to the origin of replication (oriC) to initiate formation of the DNA replication initiation complex once per cell cycle. Binds the DnaA box (a 9 base pair repeat at the origin) and separates the double-stranded (ds)DNA. Forms a right-handed helical filament on oriC DNA; dsDNA binds to the exterior of the filament while single-stranded (ss)DNA is stabiized in the filament's interior. The ATP-DnaA-oriC complex binds and stabilizes one strand of the AT-rich DNA unwinding element (DUE), permitting loading of DNA polymerase. After initiation quickly degrades to an ADP-DnaA complex that is not apt for DNA replication. Binds acidic phospholipids. This chain is Chromosomal replication initiator protein DnaA, found in Lacticaseibacillus casei (strain BL23) (Lactobacillus casei).